Reading from the N-terminus, the 188-residue chain is Elongation factor P (188 aa).

It belongs to the elongation factor P family.

It is found in the cytoplasm. It functions in the pathway protein biosynthesis; polypeptide chain elongation. Involved in peptide bond synthesis. Stimulates efficient translation and peptide-bond synthesis on native or reconstituted 70S ribosomes in vitro. Probably functions indirectly by altering the affinity of the ribosome for aminoacyl-tRNA, thus increasing their reactivity as acceptors for peptidyl transferase. The chain is Elongation factor P from Rickettsia rickettsii (strain Iowa).